The chain runs to 67 residues: MPKLKTKSGAKKRFIPKKSGKVKFRRAGVRHLATFGKTKKQKRHLRGTDHLAPMDAKKIKECFPYAR.

This sequence belongs to the bacterial ribosomal protein bL35 family.

The sequence is that of Large ribosomal subunit protein bL35 from Anaeromyxobacter sp. (strain Fw109-5).